Here is a 239-residue protein sequence, read N- to C-terminus: Cysteine-rich venom protein 2 (239 aa).

The signal sequence occupies residues 1 to 19 (MIALIVLPILAAVLQQSSG). Residues 38–166 (VDLHNSLRRS…EYSYFYVCQY (129 aa)) enclose the SCP domain. 7 cysteine pairs are disulfide-bonded: Cys-75/Cys-153, Cys-92/Cys-167, Cys-148/Cys-164, Cys-186/Cys-193, Cys-189/Cys-198, Cys-202/Cys-234, and Cys-219/Cys-232. Positions 198–234 (CTNPCPKKISTQLPRFGPQAGCQDKQMQSDCSATCFC) constitute a ShKT domain.

Belongs to the CRISP family. In terms of tissue distribution, expressed by the venom gland.

The protein localises to the secreted. Its function is as follows. Weakly blocks contraction of smooth muscle elicited by high potassium-induced depolarization, but does not block caffeine-stimulated contraction. May target voltage-gated calcium channels on smooth muscle. The polypeptide is Cysteine-rich venom protein 2 (Sistrurus catenatus edwardsii (Desert massasauga)).